A 122-amino-acid polypeptide reads, in one-letter code: Holo-[acyl-carrier-protein] synthase (122 aa).

The Mg(2+) site is built by aspartate 8 and glutamate 55.

The protein belongs to the P-Pant transferase superfamily. AcpS family. Mg(2+) serves as cofactor.

The protein localises to the cytoplasm. The enzyme catalyses apo-[ACP] + CoA = holo-[ACP] + adenosine 3',5'-bisphosphate + H(+). Its function is as follows. Transfers the 4'-phosphopantetheine moiety from coenzyme A to a Ser of acyl-carrier-protein. This is Holo-[acyl-carrier-protein] synthase from Fusobacterium nucleatum subsp. nucleatum (strain ATCC 25586 / DSM 15643 / BCRC 10681 / CIP 101130 / JCM 8532 / KCTC 2640 / LMG 13131 / VPI 4355).